Consider the following 191-residue polypeptide: Cytochrome b-245 light chain (191 aa).

Over 2-7 (GQIEWA) the chain is Cytoplasmic. Residues 8-30 (MWANEQALASGLILITGGIVATA) traverse the membrane as a helical segment. Over 31 to 35 (GQFTQ) the chain is Extracellular. The helical transmembrane segment at 36-53 (WYLGAYSIAAGVLVCLLE) threads the bilayer. Residues 54 to 69 (YPRGKRSKGSTMERCG) are Cytoplasmic-facing. The stretch at 70 to 80 (QKYLTRVVKLF) is an intramembrane region. Over 81 to 86 (GPLTRN) the chain is Cytoplasmic. A helical transmembrane segment spans residues 87–104 (YYIRAFLHLGLAVPAGFL). L105 is a topological domain (extracellular). Residues 106–126 (ATILGTACLAIASGIYLLAAI) form a helical membrane-spanning segment. At 127–191 (RGEQWSPIEP…NPMPVNDEVV (65 aa)) the chain is on the cytoplasmic side. Positions 134-191 (IEPKPKERPQIGGTIKQPPSNPPPRPPAEARKKPSEEAAGVPTGGPQENPMPVNDEVV) are disordered. At T147 the chain carries Phosphothreonine. A Glycyl lysine isopeptide (Lys-Gly) (interchain with G-Cter in ubiquitin) cross-link involves residue K149. At S168 the chain carries Phosphoserine.

The protein belongs to the p22phox family. As to quaternary structure, component of the phagocyte NADPH oxidase core complex/cytochrome b558 complex, composed of CYBB (heavy chain (beta)) and CYBA (light chain (alpha)). Component of the phagocyte NADPH oxidase complex composed of an obligatory core heterodimer formed by the membrane proteins CYBA and CYBB and the cytosolic regulatory subunits NCF1/p47-phox, NCF2/p67-phox, NCF4/p40-phox and the small GTPase RAC1 or RAC2. Interacts with NCF1 (via SH3 domain). Interacts with SH3PXD2A. Interacts with DUOX1, DUOX2 and TPO. Interacts with NOX4; this interaction mediates superoxide generation. Interacts with calprotectin (S100A8/9). Interacts with GBP7. Interacts with NOXO1. Forms a heterodimer with NOX3 and is essential for activity and cell membrane localization of NOX3. Interacts with NOX1. In terms of processing, phosphorylation at Thr-147 enhances NADPH oxidase activity by promoting NCF1/p47-phox binding. Ubiquitinated at Lys-149 likely by RNF145.

Its subcellular location is the cell membrane. Its function is as follows. Subunit of NADPH oxidase complexes that is required for the NADPH oxidase activity that generates, in various cell types, superoxide from molecular oxygen utilizing NADPH as an electron donor. Subunit of the phagocyte NADPH oxidase complex that mediates the transfer of electrons from cytosolic NADPH to O2 to produce the superoxide anion (O2(-)). In the activated complex, electrons are first transferred from NADPH to flavin adenine dinucleotide (FAD) and subsequently transferred via two heme molecules to molecular oxygen, producing superoxide through an outer-sphere reaction. Activation of the NADPH oxidase complex is initiated by the assembly of cytosolic subunits of the NADPH oxidase complex with the core NADPH oxidase complex to form a complex at the plasma membrane or phagosomal membrane. This activation process is initiated by phosphorylation dependent binding of the cytosolic NCF1/p47-phox subunit to the C-terminus of CYBA/p22-phox. Aassociates with NOX3 to form a functional NADPH oxidase constitutively generating superoxide. In Bos taurus (Bovine), this protein is Cytochrome b-245 light chain.